Consider the following 363-residue polypeptide: Phosphoribosylformylglycinamidine cyclo-ligase (363 aa).

It belongs to the AIR synthase family.

The protein localises to the cytoplasm. The catalysed reaction is 2-formamido-N(1)-(5-O-phospho-beta-D-ribosyl)acetamidine + ATP = 5-amino-1-(5-phospho-beta-D-ribosyl)imidazole + ADP + phosphate + H(+). Its pathway is purine metabolism; IMP biosynthesis via de novo pathway; 5-amino-1-(5-phospho-D-ribosyl)imidazole from N(2)-formyl-N(1)-(5-phospho-D-ribosyl)glycinamide: step 2/2. The chain is Phosphoribosylformylglycinamidine cyclo-ligase from Parvibaculum lavamentivorans (strain DS-1 / DSM 13023 / NCIMB 13966).